The primary structure comprises 459 residues: tRNA modification GTPase MnmE (459 aa).

(6S)-5-formyl-5,6,7,8-tetrahydrofolate-binding residues include Arg-22, Glu-85, and Arg-124. The 160-residue stretch at 221–380 (GLSTVIVGKP…LEIQIRDLFF (160 aa)) folds into the TrmE-type G domain. Position 231 (Asn-231) interacts with K(+). GTP-binding positions include 231-236 (NVGKSS), 250-256 (TEVAGTT), and 275-278 (DTAG). Residue Ser-235 coordinates Mg(2+). Positions 250, 252, and 255 each coordinate K(+). Mg(2+) is bound at residue Thr-256. A (6S)-5-formyl-5,6,7,8-tetrahydrofolate-binding site is contributed by Lys-459.

Belongs to the TRAFAC class TrmE-Era-EngA-EngB-Septin-like GTPase superfamily. TrmE GTPase family. In terms of assembly, homodimer. Heterotetramer of two MnmE and two MnmG subunits. K(+) is required as a cofactor.

Its subcellular location is the cytoplasm. Its function is as follows. Exhibits a very high intrinsic GTPase hydrolysis rate. Involved in the addition of a carboxymethylaminomethyl (cmnm) group at the wobble position (U34) of certain tRNAs, forming tRNA-cmnm(5)s(2)U34. This is tRNA modification GTPase MnmE from Staphylococcus aureus (strain bovine RF122 / ET3-1).